Reading from the N-terminus, the 722-residue chain is Zinc finger protein 219 (722 aa).

The disordered stretch occupies residues 1–21 (MEGSRPRAPSGHLAPSPPAFD). Serine 16 is modified (phosphoserine). C2H2-type zinc fingers lie at residues 57–79 (FPCP…LRAH) and 85–107 (FQCP…LRTH). The disordered stretch occupies residues 137 to 160 (ARSSGGMQATPATEGLARPQAPSS). 2 C2H2-type zinc fingers span residues 163 to 186 (FRCP…HILH) and 189 to 212 (WKCG…LTAH). The tract at residues 215-275 (PERPLAATSA…EEPPAPPEFR (61 aa)) is disordered. Pro residues-rich tracts occupy residues 225-247 (APPP…PQPE) and 259-272 (TPAP…PAPP). 2 consecutive C2H2-type zinc fingers follow at residues 274-296 (FRCQ…MRKH) and 302-324 (HACP…MKVH). The disordered stretch occupies residues 384 to 495 (LRAGEGRPNG…GTRPEGGRGA (112 aa)). Gly residues predominate over residues 390–404 (RPNGEGAEPGPGRSF). Over residues 425-438 (EPEEEEEVVEAEEE) the composition is skewed to acidic residues. Low complexity predominate over residues 463-477 (SASAAGAQARSTATQ). C2H2-type zinc fingers lie at residues 498-520 (KDCP…LRVH) and 526-548 (YKCP…LQRH). 2 disordered regions span residues 542–648 (KYHL…LHRC) and 668–722 (HHSR…GQER). Over residues 558–568 (PGPPPEPPPPS) the composition is skewed to pro residues. The segment covering 634–643 (GPGGEAGPGG) has biased composition (gly residues). The C2H2-type 9 zinc finger occupies 646 to 668 (HRCLFCPFATGAPELMALHLQVH). Residues 668–677 (HHSRRARGRR) are compositionally biased toward basic residues. Serine 692 is subject to Phosphoserine. Phosphothreonine is present on threonine 695. Serine 698 carries the post-translational modification Phosphoserine.

This sequence belongs to the krueppel C2H2-type zinc-finger protein family. Interacts with SOX9 (via C-terminus). Ubiquitous.

Its subcellular location is the nucleus. Functionally, transcriptional regulator. Recognizes and binds 2 copies of the core DNA sequence motif 5'-GGGGG-3'. Binds to the HMGN1 promoter and may repress HMGN1 expression. Regulates SNCA expression in primary cortical neurons. Binds to the COL2A1 promoter and activates COL2A1 expression, as part of a complex with SOX9. Plays a role in chondrocyte differentiation. This chain is Zinc finger protein 219 (ZNF219), found in Homo sapiens (Human).